Consider the following 290-residue polypeptide: Shikimate dehydrogenase (NADP(+)) (290 aa).

Residues 20-22 (SLS) and T67 contribute to the shikimate site. The Proton acceptor role is filled by K71. 2 residues coordinate shikimate: N92 and D107. Residues 132 to 136 (GAGGA) and M228 contribute to the NADP(+) site. A shikimate-binding site is contributed by Y230. Residue G251 participates in NADP(+) binding.

This sequence belongs to the shikimate dehydrogenase family. Homodimer.

The catalysed reaction is shikimate + NADP(+) = 3-dehydroshikimate + NADPH + H(+). The protein operates within metabolic intermediate biosynthesis; chorismate biosynthesis; chorismate from D-erythrose 4-phosphate and phosphoenolpyruvate: step 4/7. In terms of biological role, involved in the biosynthesis of the chorismate, which leads to the biosynthesis of aromatic amino acids. Catalyzes the reversible NADPH linked reduction of 3-dehydroshikimate (DHSA) to yield shikimate (SA). The sequence is that of Shikimate dehydrogenase (NADP(+)) from Geobacter sp. (strain M21).